A 77-amino-acid chain; its full sequence is U8-lycotoxin-Ls1g (77 aa).

The first 20 residues, Met1–Val20, serve as a signal peptide directing secretion. A propeptide spanning residues Gln21 to Arg26 is cleaved from the precursor.

The protein belongs to the neurotoxin 19 (CSTX) family. 08 (U8-Lctx) subfamily. Post-translationally, contains 4 disulfide bonds. As to expression, expressed by the venom gland.

The protein resides in the secreted. The polypeptide is U8-lycotoxin-Ls1g (Lycosa singoriensis (Wolf spider)).